Here is a 435-residue protein sequence, read N- to C-terminus: Islet cell autoantigen 1-like protein (435 aa).

The region spanning 44–247 (ASDAELDAKL…TAQMMSQIQE (204 aa)) is the AH domain. The disordered stretch occupies residues 391–435 (WASQEGSEHSDTLPVPSQHPKKLKYLGPLSNPDAIGHSDDELLNA). Residues 426 to 435 (GHSDDELLNA) show a composition bias toward basic and acidic residues.

This is Islet cell autoantigen 1-like protein (Ica1l) from Rattus norvegicus (Rat).